The primary structure comprises 102 residues: Small ribosomal subunit protein uS10 (102 aa).

It belongs to the universal ribosomal protein uS10 family. In terms of assembly, part of the 30S ribosomal subunit.

Involved in the binding of tRNA to the ribosomes. This Clostridium novyi (strain NT) protein is Small ribosomal subunit protein uS10.